A 747-amino-acid chain; its full sequence is Zinc finger and BTB domain-containing protein 47 (747 aa).

Positions 15-83 constitute a BTB domain; sequence CDVDLVLVPQ…IYTSKLLVNA (69 aa). A Glycyl lysine isopeptide (Lys-Gly) (interchain with G-Cter in SUMO2) cross-link involves residue Lys-190. Residues 243–424 are disordered; it reads QTLHVSTGPE…ARGPPATDGL (182 aa). A compositionally biased stretch (basic and acidic residues) spans 267 to 277; that stretch reads GREDGLQRHSD. The span at 278–354 shows a compositional bias: acidic residues; the sequence is EEEEDDEEEE…SEEEEGEEGE (77 aa). The segment covering 380–398 has biased composition (basic and acidic residues); it reads RSRENARRRGTPEPEEAGR. Residues 436–459 form a C2H2-type 1 zinc finger; it reads HPCQKCPRVFNNRWYLEKHMNVTH. Residues 463–485 form a C2H2-type 2; degenerate zinc finger; it reads QICDQCGKRFLLESELLLHRQTD. C2H2-type zinc fingers lie at residues 490–513, 520–542, 548–570, 576–598, 604–626, 632–654, and 660–687; these read IQCV…KIVH, FSCE…MVAH, FTCE…SLQH, FRCE…MSIH, FMCQ…MKTH, YICE…RRTH, and YPCD…RVSH. The tract at residues 694–747 is disordered; the sequence is VPAAPGLPPTQPQAHALPLLPGLPQTLPPPPHLPPPPPLFPTTASPGGRMNANN. The span at 719–733 shows a compositional bias: pro residues; sequence TLPPPPHLPPPPPLF.

The protein belongs to the krueppel C2H2-type zinc-finger protein family.

The protein resides in the nucleus. Functionally, may be involved in transcriptional regulation. In Homo sapiens (Human), this protein is Zinc finger and BTB domain-containing protein 47 (ZBTB47).